Here is a 640-residue protein sequence, read N- to C-terminus: Threonine--tRNA ligase (640 aa).

Residues 1 to 61 (MPTITLPDGS…ERDASLQIIT (61 aa)) enclose the TGS domain. A catalytic region spans residues 242 to 533 (DHRRIGKQLD…LIEHYAGAFP (292 aa)). 3 residues coordinate Zn(2+): Cys333, His384, and His510.

It belongs to the class-II aminoacyl-tRNA synthetase family. In terms of assembly, homodimer. It depends on Zn(2+) as a cofactor.

The protein localises to the cytoplasm. It catalyses the reaction tRNA(Thr) + L-threonine + ATP = L-threonyl-tRNA(Thr) + AMP + diphosphate + H(+). In terms of biological role, catalyzes the attachment of threonine to tRNA(Thr) in a two-step reaction: L-threonine is first activated by ATP to form Thr-AMP and then transferred to the acceptor end of tRNA(Thr). Also edits incorrectly charged L-seryl-tRNA(Thr). This Stutzerimonas stutzeri (strain A1501) (Pseudomonas stutzeri) protein is Threonine--tRNA ligase.